A 645-amino-acid polypeptide reads, in one-letter code: MSDKVYPVTAEWSKSAYVDAAKYKSMYESSVSEPDKFWGEHGKRIDWVKPYTKVKNTSFDPHNVSIKWFEDGVTNVSTNCIDRHLATLGDQTAIIWEGDDPNESKHITYKQLHEEVCRLANVLKSYGISKGDTVTIYLPMIPEAAYAMLACARIGAIHSIVFGGFSADSLGGRIEGCKSKLIITADEGYRGGRKVPLKVNADAAIKKVDGIVETMIVVRRTGGKVAWTEGRDVWYDEALAKASPDCPAAEMNAEDPLFILFTSGSTGAPKGVVHSTGGYLVWASMTHQYVFDYRPGEVYWCTADVGWVTGHSYIVYGPLANGATTLMFEGVPSYPTISRFWDVVDKHQVNIFYTAPTAIRSLMGAGDGPVKATSRKTLRVLGSVGEPINPEAWEWYYRVVGEERCPIVDTWWQTETGGILISPLPGATALKPGSATQPFFGVQPQVVDAAGEVLEGPCSGNLVIADSWPAQMRTLFNDHERFVQAYFSAYPGKYFTGDGCRRDEDGYYWITGRVDDVINVSGHRLGTAEVESSLVAHIKVAEAAVVGYPHDLKGQGIYAYVTLMTGIEPSEELRKELVSWVRKDIGPIASPDIVHFAPGLPKTRSGKIMRRILRKIAEKEFSALGDTSTLADPSVVDDLIRERAN.

CoA is bound by residues 190 to 193 (RGGR) and Thr309. ATP-binding positions include 385–387 (GEP), 409–414 (DTWWQT), Asp498, and Arg513. Residue Ser521 participates in CoA binding. Arg524 is a binding site for ATP. Residues Val535, His537, and Val540 each contribute to the Mg(2+) site. Position 582 (Arg582) interacts with CoA. At Lys607 the chain carries N6-acetyllysine.

The protein belongs to the ATP-dependent AMP-binding enzyme family. Requires Mg(2+) as cofactor. In terms of processing, acetylated. Deacetylation by the SIR2-homolog deacetylase activates the enzyme.

It carries out the reaction acetate + ATP + CoA = acetyl-CoA + AMP + diphosphate. In terms of biological role, catalyzes the conversion of acetate into acetyl-CoA (AcCoA), an essential intermediate at the junction of anabolic and catabolic pathways. AcsA undergoes a two-step reaction. In the first half reaction, AcsA combines acetate with ATP to form acetyl-adenylate (AcAMP) intermediate. In the second half reaction, it can then transfer the acetyl group from AcAMP to the sulfhydryl group of CoA, forming the product AcCoA. This Methylocella silvestris (strain DSM 15510 / CIP 108128 / LMG 27833 / NCIMB 13906 / BL2) protein is Acetyl-coenzyme A synthetase.